A 211-amino-acid polypeptide reads, in one-letter code: Uracil phosphoribosyltransferase (211 aa).

Residues R79, R104, and 131-139 (DPMLATGGS) each bind 5-phospho-alpha-D-ribose 1-diphosphate. Residues I196 and 201–203 (GDA) contribute to the uracil site. D202 serves as a coordination point for 5-phospho-alpha-D-ribose 1-diphosphate.

This sequence belongs to the UPRTase family. Mg(2+) serves as cofactor.

It carries out the reaction UMP + diphosphate = 5-phospho-alpha-D-ribose 1-diphosphate + uracil. It functions in the pathway pyrimidine metabolism; UMP biosynthesis via salvage pathway; UMP from uracil: step 1/1. Its activity is regulated as follows. Allosterically activated by GTP. Its function is as follows. Catalyzes the conversion of uracil and 5-phospho-alpha-D-ribose 1-diphosphate (PRPP) to UMP and diphosphate. The polypeptide is Uracil phosphoribosyltransferase (Lactococcus lactis subsp. lactis (strain IL1403) (Streptococcus lactis)).